The primary structure comprises 294 residues: Shikimate dehydrogenase (NADP(+)) (294 aa).

Residues Ser-23–Ser-25 and Thr-76 contribute to the shikimate site. Lys-80 functions as the Proton acceptor in the catalytic mechanism. Shikimate-binding residues include Asn-101 and Asp-116. NADP(+) contacts are provided by residues Gly-141 to Ala-145 and Met-233. Tyr-235 contributes to the shikimate binding site. An NADP(+)-binding site is contributed by Gly-256.

This sequence belongs to the shikimate dehydrogenase family. As to quaternary structure, homodimer.

The catalysed reaction is shikimate + NADP(+) = 3-dehydroshikimate + NADPH + H(+). The protein operates within metabolic intermediate biosynthesis; chorismate biosynthesis; chorismate from D-erythrose 4-phosphate and phosphoenolpyruvate: step 4/7. Involved in the biosynthesis of the chorismate, which leads to the biosynthesis of aromatic amino acids. Catalyzes the reversible NADPH linked reduction of 3-dehydroshikimate (DHSA) to yield shikimate (SA). The polypeptide is Shikimate dehydrogenase (NADP(+)) (Methylibium petroleiphilum (strain ATCC BAA-1232 / LMG 22953 / PM1)).